The sequence spans 693 residues: MPRQFDLEHTRNIGIMAHIDAGKTTTTERILFYTGRVHKIGETHEGSATMDWMEQEQERGITITSAATTAQWKGNRINIIDTPGHVDFTVEVERSLRVLDGSVTVFCAKGGVEPQSETVWRQADKYGVPRMAYVNKMDIMGADFYNVIAMMKDRLQCNAVPIQLPIGSEDCFVGMVDLVTMTSHIFKDDLGQVIEDQPIPDDMIEISNKYREQLLEAVAEQDEELMMKYLEGEEFTLEEIKAGIRKATIAVKMIPVTCGSSYKNKGVQQMLDAVIDFMPSPTDIPAIKGISVDGDTEIERPADDNGPFAALAFKIMTDPYVGKLCFFRVYSGTLNSGSYVLNSTKNKRERIGRILQMHANHREEIQVVHSGDIAAAVGLKDTTTGDTLCEENNPVILESMEFPEPVIEVAIEPKTKAGQEKMGVALQKLAEEDPTFRVHTDAETGQTIIGGMGELHLDIIVDRMLREFKVEANVGNPQVSYKETIRKAVKSEMKYARQSGGKGQYGHCVIELEPREPGAGYEFVNKITGGAIPKEYIAPIDAGIQEAMNTGVLAGYNVVDIKVTLIDGSYHEVDSSEMAFKIAGSMAFKDGCRKANPVLLEPIMKVDVSVPEEYMGDVMGGLNARRGRIEGMEARGGAQNIRAVVPLSEMFGYATALRSSTQGRGTFSMQTSHFEEVPKSIQEKVISSRTTGV.

Residues 8–282 (EHTRNIGIMA…AVIDFMPSPT (275 aa)) enclose the tr-type G domain. GTP is bound by residues 17–24 (AHIDAGKT), 81–85 (DTPGH), and 135–138 (NKMD).

This sequence belongs to the TRAFAC class translation factor GTPase superfamily. Classic translation factor GTPase family. EF-G/EF-2 subfamily.

It localises to the cytoplasm. In terms of biological role, catalyzes the GTP-dependent ribosomal translocation step during translation elongation. During this step, the ribosome changes from the pre-translocational (PRE) to the post-translocational (POST) state as the newly formed A-site-bound peptidyl-tRNA and P-site-bound deacylated tRNA move to the P and E sites, respectively. Catalyzes the coordinated movement of the two tRNA molecules, the mRNA and conformational changes in the ribosome. This chain is Elongation factor G, found in Ruminiclostridium cellulolyticum (strain ATCC 35319 / DSM 5812 / JCM 6584 / H10) (Clostridium cellulolyticum).